Reading from the N-terminus, the 270-residue chain is Urease accessory protein UreD (270 aa).

It belongs to the UreD family. UreD, UreF and UreG form a complex that acts as a GTP-hydrolysis-dependent molecular chaperone, activating the urease apoprotein by helping to assemble the nickel containing metallocenter of UreC. The UreE protein probably delivers the nickel.

The protein resides in the cytoplasm. Its function is as follows. Required for maturation of urease via the functional incorporation of the urease nickel metallocenter. The chain is Urease accessory protein UreD from Microcystis aeruginosa (strain NIES-843 / IAM M-2473).